The chain runs to 1115 residues: DNA-directed RNA polymerase subunit beta (1115 aa).

The disordered stretch occupies residues 1084-1115 (HEAGEGEDDEYFEEDEEAVDDEPMTFDDDDME). Residues 1088 to 1115 (EGEDDEYFEEDEEAVDDEPMTFDDDDME) are compositionally biased toward acidic residues.

The protein belongs to the RNA polymerase beta chain family. The RNAP catalytic core consists of 2 alpha, 1 beta, 1 beta' and 1 omega subunit. When a sigma factor is associated with the core the holoenzyme is formed, which can initiate transcription.

The catalysed reaction is RNA(n) + a ribonucleoside 5'-triphosphate = RNA(n+1) + diphosphate. DNA-dependent RNA polymerase catalyzes the transcription of DNA into RNA using the four ribonucleoside triphosphates as substrates. The polypeptide is DNA-directed RNA polymerase subunit beta (Desulfitobacterium hafniense (strain DSM 10664 / DCB-2)).